The chain runs to 139 residues: Large-conductance mechanosensitive channel (139 aa).

Helical transmembrane passes span 9–29 (AFAV…GAAF) and 79–99 (IQTV…VKAI).

It belongs to the MscL family. As to quaternary structure, homopentamer.

The protein resides in the cell inner membrane. Its function is as follows. Channel that opens in response to stretch forces in the membrane lipid bilayer. May participate in the regulation of osmotic pressure changes within the cell. The protein is Large-conductance mechanosensitive channel of Pseudomonas putida (strain ATCC 47054 / DSM 6125 / CFBP 8728 / NCIMB 11950 / KT2440).